Here is an 899-residue protein sequence, read N- to C-terminus: Protein translocase subunit SecA (899 aa).

ATP contacts are provided by residues glutamine 87, 105-109 (GEGKT), and aspartate 516. Residues cysteine 884, cysteine 886, cysteine 895, and histidine 896 each contribute to the Zn(2+) site.

Belongs to the SecA family. Monomer and homodimer. Part of the essential Sec protein translocation apparatus which comprises SecA, SecYEG and auxiliary proteins SecDF. Other proteins may also be involved. Zn(2+) serves as cofactor.

It is found in the cell inner membrane. The protein resides in the cytoplasm. It carries out the reaction ATP + H2O + cellular proteinSide 1 = ADP + phosphate + cellular proteinSide 2.. Its function is as follows. Part of the Sec protein translocase complex. Interacts with the SecYEG preprotein conducting channel. Has a central role in coupling the hydrolysis of ATP to the transfer of proteins into and across the cell membrane, serving as an ATP-driven molecular motor driving the stepwise translocation of polypeptide chains across the membrane. The polypeptide is Protein translocase subunit SecA (Borrelia garinii subsp. bavariensis (strain ATCC BAA-2496 / DSM 23469 / PBi) (Borreliella bavariensis)).